The chain runs to 118 residues: Ig heavy chain V region X24 (118 aa).

The region spanning 1–111 (EVKLLESGGG…GYFDYWGQGT (111 aa)) is the Ig-like domain.

The chain is Ig heavy chain V region X24 from Mus musculus (Mouse).